Consider the following 388-residue polypeptide: Succinate--CoA ligase [ADP-forming] subunit beta (388 aa).

Residues 9-244 (KEILRKYNVP…LDEEDANEIE (236 aa)) form the ATP-grasp domain. Residues Lys46, 53-55 (GRG), Glu99, Ala102, and Glu107 contribute to the ATP site. Mg(2+) contacts are provided by Asn199 and Asp213. Substrate is bound by residues Asn264 and 321 to 323 (GIM).

The protein belongs to the succinate/malate CoA ligase beta subunit family. In terms of assembly, heterotetramer of two alpha and two beta subunits. Mg(2+) is required as a cofactor.

The enzyme catalyses succinate + ATP + CoA = succinyl-CoA + ADP + phosphate. The catalysed reaction is GTP + succinate + CoA = succinyl-CoA + GDP + phosphate. It participates in carbohydrate metabolism; tricarboxylic acid cycle; succinate from succinyl-CoA (ligase route): step 1/1. In terms of biological role, succinyl-CoA synthetase functions in the citric acid cycle (TCA), coupling the hydrolysis of succinyl-CoA to the synthesis of either ATP or GTP and thus represents the only step of substrate-level phosphorylation in the TCA. The beta subunit provides nucleotide specificity of the enzyme and binds the substrate succinate, while the binding sites for coenzyme A and phosphate are found in the alpha subunit. The polypeptide is Succinate--CoA ligase [ADP-forming] subunit beta (Ralstonia nicotianae (strain ATCC BAA-1114 / GMI1000) (Ralstonia solanacearum)).